An 88-amino-acid polypeptide reads, in one-letter code: Exodeoxyribonuclease 7 small subunit (88 aa).

The segment at Ala69–Ala88 is disordered.

Belongs to the XseB family. Heterooligomer composed of large and small subunits.

It is found in the cytoplasm. The catalysed reaction is Exonucleolytic cleavage in either 5'- to 3'- or 3'- to 5'-direction to yield nucleoside 5'-phosphates.. Functionally, bidirectionally degrades single-stranded DNA into large acid-insoluble oligonucleotides, which are then degraded further into small acid-soluble oligonucleotides. The protein is Exodeoxyribonuclease 7 small subunit of Streptomyces coelicolor (strain ATCC BAA-471 / A3(2) / M145).